The sequence spans 333 residues: Putative fimbrium anchoring subunit Fim4B (333 aa).

A signal peptide spans 1 to 20 (MRNTRYGFLVLLSSLLMLTG). C21 is lipidated: N-palmitoyl cysteine. Residue C21 is the site of S-diacylglycerol cysteine attachment. The disordered stretch occupies residues 274-333 (ENAGTGEDGKPTPPPEIELPPDDKIEVDKPETPPNPDGGGGMGGNVDGWGPEDNVELPVN). Residues 294-304 (PDDKIEVDKPE) show a composition bias toward basic and acidic residues. The span at 310–320 (DGGGGMGGNVD) shows a compositional bias: gly residues.

This sequence belongs to the bacteroidetes fimbrillin superfamily. FimB/Mfa2 family.

The protein resides in the cell outer membrane. Functionally, putative fimbrium anchoring subunit. In Bacteroides ovatus (strain ATCC 8483 / DSM 1896 / JCM 5824 / BCRC 10623 / CCUG 4943 / NCTC 11153), this protein is Putative fimbrium anchoring subunit Fim4B.